The following is a 340-amino-acid chain: S-adenosylmethionine:tRNA ribosyltransferase-isomerase (340 aa).

Belongs to the QueA family. Monomer.

It is found in the cytoplasm. The catalysed reaction is 7-aminomethyl-7-carbaguanosine(34) in tRNA + S-adenosyl-L-methionine = epoxyqueuosine(34) in tRNA + adenine + L-methionine + 2 H(+). It participates in tRNA modification; tRNA-queuosine biosynthesis. In terms of biological role, transfers and isomerizes the ribose moiety from AdoMet to the 7-aminomethyl group of 7-deazaguanine (preQ1-tRNA) to give epoxyqueuosine (oQ-tRNA). This Francisella tularensis subsp. holarctica (strain OSU18) protein is S-adenosylmethionine:tRNA ribosyltransferase-isomerase.